A 363-amino-acid chain; its full sequence is Histidinol-phosphate aminotransferase (363 aa).

Lys-218 carries the post-translational modification N6-(pyridoxal phosphate)lysine.

The protein belongs to the class-II pyridoxal-phosphate-dependent aminotransferase family. Histidinol-phosphate aminotransferase subfamily. Homodimer. Pyridoxal 5'-phosphate serves as cofactor.

The enzyme catalyses L-histidinol phosphate + 2-oxoglutarate = 3-(imidazol-4-yl)-2-oxopropyl phosphate + L-glutamate. It participates in amino-acid biosynthesis; L-histidine biosynthesis; L-histidine from 5-phospho-alpha-D-ribose 1-diphosphate: step 7/9. The chain is Histidinol-phosphate aminotransferase from Xanthomonas euvesicatoria pv. vesicatoria (strain 85-10) (Xanthomonas campestris pv. vesicatoria).